We begin with the raw amino-acid sequence, 575 residues long: Isocitrate dehydrogenase kinase/phosphatase (575 aa).

Residues 315–321 (APGIRGM) and K336 contribute to the ATP site. D371 is a catalytic residue.

This sequence belongs to the AceK family.

The protein localises to the cytoplasm. It catalyses the reaction L-seryl-[isocitrate dehydrogenase] + ATP = O-phospho-L-seryl-[isocitrate dehydrogenase] + ADP + H(+). Bifunctional enzyme which can phosphorylate or dephosphorylate isocitrate dehydrogenase (IDH) on a specific serine residue. This is a regulatory mechanism which enables bacteria to bypass the Krebs cycle via the glyoxylate shunt in response to the source of carbon. When bacteria are grown on glucose, IDH is fully active and unphosphorylated, but when grown on acetate or ethanol, the activity of IDH declines drastically concomitant with its phosphorylation. The polypeptide is Isocitrate dehydrogenase kinase/phosphatase (Citrobacter koseri (strain ATCC BAA-895 / CDC 4225-83 / SGSC4696)).